The following is a 406-amino-acid chain: Tyrosine--tRNA ligase (406 aa).

An L-tyrosine-binding site is contributed by tyrosine 35. The 'HIGH' region motif lies at 40–49; it reads ATSASLHIGH. Residues tyrosine 167 and glutamine 171 each contribute to the L-tyrosine site. A 'KMSKS' region motif is present at residues 227–231; sequence KMGKS. Position 230 (lysine 230) interacts with ATP. The S4 RNA-binding domain occupies 341–405; that stretch reads ILLVDLMVLA…IGKKKILRIV (65 aa).

This sequence belongs to the class-I aminoacyl-tRNA synthetase family. TyrS type 1 subfamily. In terms of assembly, homodimer.

It is found in the cytoplasm. It carries out the reaction tRNA(Tyr) + L-tyrosine + ATP = L-tyrosyl-tRNA(Tyr) + AMP + diphosphate + H(+). Its function is as follows. Catalyzes the attachment of tyrosine to tRNA(Tyr) in a two-step reaction: tyrosine is first activated by ATP to form Tyr-AMP and then transferred to the acceptor end of tRNA(Tyr). The chain is Tyrosine--tRNA ligase from Borrelia recurrentis (strain A1).